Consider the following 75-residue polypeptide: Small ribosomal subunit protein bS18 (75 aa).

The protein belongs to the bacterial ribosomal protein bS18 family. As to quaternary structure, part of the 30S ribosomal subunit. Forms a tight heterodimer with protein bS6.

Its function is as follows. Binds as a heterodimer with protein bS6 to the central domain of the 16S rRNA, where it helps stabilize the platform of the 30S subunit. The sequence is that of Small ribosomal subunit protein bS18 from Sodalis glossinidius (strain morsitans).